A 652-amino-acid polypeptide reads, in one-letter code: DNA ligase (652 aa).

NAD(+) contacts are provided by residues aspartate 29–aspartate 33, serine 78–leucine 79, and glutamate 107. Lysine 109 serves as the catalytic N6-AMP-lysine intermediate. Positions 130, 164, 278, and 302 each coordinate NAD(+). Zn(2+) is bound by residues cysteine 395, cysteine 398, cysteine 413, and cysteine 418. The 76-residue stretch at aspartate 577–leucine 652 folds into the BRCT domain.

This sequence belongs to the NAD-dependent DNA ligase family. LigA subfamily. Mg(2+) serves as cofactor. The cofactor is Mn(2+).

The catalysed reaction is NAD(+) + (deoxyribonucleotide)n-3'-hydroxyl + 5'-phospho-(deoxyribonucleotide)m = (deoxyribonucleotide)n+m + AMP + beta-nicotinamide D-nucleotide.. Functionally, DNA ligase that catalyzes the formation of phosphodiester linkages between 5'-phosphoryl and 3'-hydroxyl groups in double-stranded DNA using NAD as a coenzyme and as the energy source for the reaction. It is essential for DNA replication and repair of damaged DNA. The sequence is that of DNA ligase from Streptococcus uberis (strain ATCC BAA-854 / 0140J).